The chain runs to 174 residues: Small ribosomal subunit protein uS7c (174 aa).

The protein belongs to the universal ribosomal protein uS7 family. Part of the 30S ribosomal subunit.

The protein resides in the plastid. The protein localises to the chloroplast. Functionally, one of the primary rRNA binding proteins, it binds directly to 16S rRNA where it nucleates assembly of the head domain of the 30S subunit. This Stigeoclonium helveticum (Green alga) protein is Small ribosomal subunit protein uS7c (rps7).